Reading from the N-terminus, the 624-residue chain is (-)-beta-phellandrene synthase 3, chloroplastic (624 aa).

The N-terminal 48 residues, 1–48 (MAIVSSVPLASKSCLHKSLISSIHKLKPFCRTIPTLGMSRPGKYVMPS), are a transit peptide targeting the chloroplast. Mg(2+)-binding residues include D375, D379, and D527. Residues 375–379 (DDMYD) carry the DDXXD motif motif.

This sequence belongs to the terpene synthase family. Tpsd subfamily. Mg(2+) is required as a cofactor. Mn(2+) serves as cofactor.

It is found in the plastid. The protein resides in the chloroplast. It carries out the reaction (2E)-geranyl diphosphate = (-)-beta-phellandrene + diphosphate. Its pathway is terpene metabolism; oleoresin biosynthesis. Terpene synthase (TPS) involved in the biosynthesis of monoterpene natural products included in conifer oleoresin secretions and volatile emissions; these compounds contribute to biotic and abiotic stress defense against herbivores and pathogens. Catalyzes the conversion of (2E)-geranyl diphosphate (GPP) to (-)-beta-phellandrene. In Picea sitchensis (Sitka spruce), this protein is (-)-beta-phellandrene synthase 3, chloroplastic.